The following is a 243-amino-acid chain: Large ribosomal subunit protein uL3 (243 aa).

2 disordered regions span residues 139 to 164 and 218 to 243; these read VSHR…KMPG and KPGK…GEGA. Gln151 bears the N5-methylglutamine mark. The span at 218 to 229 shows a compositional bias: basic and acidic residues; that stretch reads KPGKFKLADGGD. A compositionally biased stretch (low complexity) spans 230–243; that stretch reads KAAAAPEATAGEGA.

It belongs to the universal ribosomal protein uL3 family. Part of the 50S ribosomal subunit. Forms a cluster with proteins L14 and L19. In terms of processing, methylated by PrmB.

One of the primary rRNA binding proteins, it binds directly near the 3'-end of the 23S rRNA, where it nucleates assembly of the 50S subunit. This Afipia carboxidovorans (strain ATCC 49405 / DSM 1227 / KCTC 32145 / OM5) (Oligotropha carboxidovorans) protein is Large ribosomal subunit protein uL3.